The chain runs to 436 residues: 3-hydroxy-3-methylglutaryl-coenzyme A reductase (436 aa).

Active-site charge relay system residues include Glu99, Lys277, and Asp293. His390 functions as the Proton donor in the catalytic mechanism.

It belongs to the HMG-CoA reductase family.

It catalyses the reaction (R)-mevalonate + 2 NADP(+) + CoA = (3S)-3-hydroxy-3-methylglutaryl-CoA + 2 NADPH + 2 H(+). It participates in metabolic intermediate biosynthesis; (R)-mevalonate biosynthesis; (R)-mevalonate from acetyl-CoA: step 3/3. Functionally, converts HMG-CoA to mevalonate. This chain is 3-hydroxy-3-methylglutaryl-coenzyme A reductase (hmgA), found in Archaeoglobus fulgidus (strain ATCC 49558 / DSM 4304 / JCM 9628 / NBRC 100126 / VC-16).